Reading from the N-terminus, the 246-residue chain is MTRIELKGVWKLSKNCAIIVAAGKGSRMGFDINKVFIEIGEKPIIQYSLECFESHPDIDEIVLVAKLNEIEKFQHIIKSNNMKKVKKIVVGGNTRRESVVNALSVIKDSDVVVIHDGARPFISHDLISKGIKYANKYGACTCGVTPKDTIKVKDKLNFIKESLNRDFLISVQTPQSFKYKLIWEGHNHKIDENINITDDTSLMEYLGHNVFVYNGEYTNIKITTKEDLIFAEEFVKKFNNVKNSLT.

It belongs to the IspD/TarI cytidylyltransferase family. IspD subfamily.

It carries out the reaction 2-C-methyl-D-erythritol 4-phosphate + CTP + H(+) = 4-CDP-2-C-methyl-D-erythritol + diphosphate. The protein operates within isoprenoid biosynthesis; isopentenyl diphosphate biosynthesis via DXP pathway; isopentenyl diphosphate from 1-deoxy-D-xylulose 5-phosphate: step 2/6. In terms of biological role, catalyzes the formation of 4-diphosphocytidyl-2-C-methyl-D-erythritol from CTP and 2-C-methyl-D-erythritol 4-phosphate (MEP). This is 2-C-methyl-D-erythritol 4-phosphate cytidylyltransferase from Clostridium tetani (strain Massachusetts / E88).